Reading from the N-terminus, the 85-residue chain is Large ribosomal subunit protein bL27 (85 aa).

A disordered region spans residues 1–22 (MAHKKGVGSTRNGRDSESKRLG).

It belongs to the bacterial ribosomal protein bL27 family.

The polypeptide is Large ribosomal subunit protein bL27 (Geobacter metallireducens (strain ATCC 53774 / DSM 7210 / GS-15)).